A 109-amino-acid chain; its full sequence is Oncomodulin-2 (109 aa).

EF-hand domains lie at 39 to 74 (MSAS…FESG) and 78 to 109 (LTES…MVHS). Residues D52, D54, S56, Y58, E63, D91, D93, D95, K97, and E102 each contribute to the Ca(2+) site.

Belongs to the parvalbumin family.

The protein is Oncomodulin-2 (OCM2) of Homo sapiens (Human).